Here is a 116-residue protein sequence, read N- to C-terminus: Secreted RxLR effector protein 9 (116 aa).

The signal sequence occupies residues 1–17 (MRLIYIFMVSIVTTLHA). The short motif at 49 to 64 (RILRGTDGNVNREQER) is the RxLR-dEER element.

The protein belongs to the RxLR effector family.

Its subcellular location is the secreted. The protein resides in the host cytoplasm. It is found in the host nucleus. Its function is as follows. Effector that acts as a broad suppressor of cell death to interrupt plant immunity. Inhibits cell death induced by cell death-inducing proteins, including the PAMP elicitor INF1 from P.infestans. The sequence is that of Secreted RxLR effector protein 9 from Plasmopara viticola (Downy mildew of grapevine).